The following is a 406-amino-acid chain: ATP-dependent RNA helicase eIF4A (406 aa).

A Q motif motif is present at residues 25–53; sequence DSFDAMDLKPELLRGVYAYGFERPSAIQQ. The Helicase ATP-binding domain occupies 56–226; sequence ILPIIKGNDV…TKFMRDPVRI (171 aa). An ATP-binding site is contributed by 69–76; the sequence is AQSGTGKT. The DEAD box signature appears at 174–177; that stretch reads DEAD. The Helicase C-terminal domain maps to 237 to 398; sequence GIKQFYIAVE…EMPMNVAGKF (162 aa).

This sequence belongs to the DEAD box helicase family. eIF4A subfamily. Component of the eIF4F complex, which composition varies with external and internal environmental conditions. It is composed of at least eIF4A, eIF4E and eIF4G.

Its subcellular location is the cytoplasm. The enzyme catalyses ATP + H2O = ADP + phosphate + H(+). Its function is as follows. ATP-dependent RNA helicase which is a subunit of the eIF4F complex involved in cap recognition and is required for mRNA binding to ribosome. In the current model of translation initiation, eIF4A unwinds RNA secondary structures in the 5'-UTR of mRNAs which is necessary to allow efficient binding of the small ribosomal subunit, and subsequent scanning for the initiator codon. This is ATP-dependent RNA helicase eIF4A (tif1) from Aspergillus fumigatus (strain ATCC MYA-4609 / CBS 101355 / FGSC A1100 / Af293) (Neosartorya fumigata).